We begin with the raw amino-acid sequence, 87 residues long: MSEELPQRRETHPEELVRNVRERERDTWQWTSIRVPEEILQRWLAMLRSGRNRKKVYREMQKWMWIHPKGPVIRACGCRLCNPGWGT.

The short motif at 40–47 (LQRWLAML) is the Nuclear export signal element. The short motif at 48-55 (RSGRNRKK) is the Nuclear localization signal element.

It localises to the virion. The protein localises to the host nucleus. Its function is as follows. Seems to function as a Vpr-like protein, since it mediates host cell cycle arrest in G2 phase. Cell cycle arrest creates a favorable environment for maximizing viral expression and production. The sequence is that of Probable Vpr-like protein (tat) from Capra hircus (Goat).